Here is a 1070-residue protein sequence, read N- to C-terminus: Carbamoyl phosphate synthase large chain (1070 aa).

Residues 1-401 (MPKRDDIKTI…ALLKAVRSLE (401 aa)) are carboxyphosphate synthetic domain. ATP-binding residues include R129, R169, G175, G176, K208, I210, E215, G241, I242, H243, Q284, and E298. The 195-residue stretch at 133–327 (RDLMNELGEP…IAKLAAKIAV (195 aa)) folds into the ATP-grasp 1 domain. Q284, E298, and N300 together coordinate Mg(2+). The Mn(2+) site is built by Q284, E298, and N300. Residues 402 to 546 (VGADHLLLEE…YSTYEEENES (145 aa)) are oligomerization domain. The carbamoyl phosphate synthetic domain stretch occupies residues 547–929 (TRSAKESVIV…ALYKGFVASG (383 aa)). In terms of domain architecture, ATP-grasp 2 spans 671-861 (EKALEILQIP…MANVATRVIL (191 aa)). 10 residues coordinate ATP: R707, R746, V748, E752, G777, V778, H779, S780, Q820, and E832. Mg(2+) contacts are provided by Q820, E832, and N834. Mn(2+) is bound by residues Q820, E832, and N834. The MGS-like domain maps to 930-1070 (TTMHDYGTVL…SEVKQPKVRV (141 aa)). An allosteric domain region spans residues 930-1070 (TTMHDYGTVL…SEVKQPKVRV (141 aa)).

It belongs to the CarB family. Composed of two chains; the small (or glutamine) chain promotes the hydrolysis of glutamine to ammonia, which is used by the large (or ammonia) chain to synthesize carbamoyl phosphate. Tetramer of heterodimers (alpha,beta)4. The cofactor is Mg(2+). It depends on Mn(2+) as a cofactor.

It carries out the reaction hydrogencarbonate + L-glutamine + 2 ATP + H2O = carbamoyl phosphate + L-glutamate + 2 ADP + phosphate + 2 H(+). It catalyses the reaction hydrogencarbonate + NH4(+) + 2 ATP = carbamoyl phosphate + 2 ADP + phosphate + 2 H(+). Its pathway is amino-acid biosynthesis; L-arginine biosynthesis; carbamoyl phosphate from bicarbonate: step 1/1. It functions in the pathway pyrimidine metabolism; UMP biosynthesis via de novo pathway; (S)-dihydroorotate from bicarbonate: step 1/3. Functionally, large subunit of the glutamine-dependent carbamoyl phosphate synthetase (CPSase). CPSase catalyzes the formation of carbamoyl phosphate from the ammonia moiety of glutamine, carbonate, and phosphate donated by ATP, constituting the first step of 2 biosynthetic pathways, one leading to arginine and/or urea and the other to pyrimidine nucleotides. The large subunit (synthetase) binds the substrates ammonia (free or transferred from glutamine from the small subunit), hydrogencarbonate and ATP and carries out an ATP-coupled ligase reaction, activating hydrogencarbonate by forming carboxy phosphate which reacts with ammonia to form carbamoyl phosphate. This chain is Carbamoyl phosphate synthase large chain, found in Listeria welshimeri serovar 6b (strain ATCC 35897 / DSM 20650 / CCUG 15529 / CIP 8149 / NCTC 11857 / SLCC 5334 / V8).